The chain runs to 310 residues: Porphobilinogen deaminase (310 aa).

Cys-242 is modified (S-(dipyrrolylmethanemethyl)cysteine).

Belongs to the HMBS family. In terms of assembly, monomer. It depends on dipyrromethane as a cofactor.

It carries out the reaction 4 porphobilinogen + H2O = hydroxymethylbilane + 4 NH4(+). It participates in porphyrin-containing compound metabolism; protoporphyrin-IX biosynthesis; coproporphyrinogen-III from 5-aminolevulinate: step 2/4. Functionally, tetrapolymerization of the monopyrrole PBG into the hydroxymethylbilane pre-uroporphyrinogen in several discrete steps. The chain is Porphobilinogen deaminase from Shewanella sp. (strain ANA-3).